Here is a 214-residue protein sequence, read N- to C-terminus: STS14 protein (214 aa).

Residues 1–19 (MFVLSTAMACLVYIYIYIY) form the signal peptide. Tandem repeats lie at residues 13–14 (YI), 15–16 (YI), and 17–18 (YI). The segment at 13–18 (YIYIYI) is 3 X 2 AA tandem repeats of Y-I. Residues 80–200 (LDAHNKARSE…YEGPATLTVC (121 aa)) form the SCP domain.

This sequence belongs to the CRISP family. In terms of tissue distribution, highly expressed in the stigma and stylar cortex throughout pistil development. Not expressed in other organs.

In terms of biological role, may protect the outer tissues of the pistil from pathogen attack. The sequence is that of STS14 protein (STS14) from Solanum tuberosum (Potato).